A 572-amino-acid polypeptide reads, in one-letter code: Isocitrate dehydrogenase kinase/phosphatase (572 aa).

ATP is bound by residues 317 to 323 (APGVRGM) and lysine 338. Aspartate 373 is a catalytic residue.

This sequence belongs to the AceK family.

It is found in the cytoplasm. It catalyses the reaction L-seryl-[isocitrate dehydrogenase] + ATP = O-phospho-L-seryl-[isocitrate dehydrogenase] + ADP + H(+). Its function is as follows. Bifunctional enzyme which can phosphorylate or dephosphorylate isocitrate dehydrogenase (IDH) on a specific serine residue. This is a regulatory mechanism which enables bacteria to bypass the Krebs cycle via the glyoxylate shunt in response to the source of carbon. When bacteria are grown on glucose, IDH is fully active and unphosphorylated, but when grown on acetate or ethanol, the activity of IDH declines drastically concomitant with its phosphorylation. This Ectopseudomonas mendocina (strain ymp) (Pseudomonas mendocina) protein is Isocitrate dehydrogenase kinase/phosphatase.